A 68-amino-acid polypeptide reads, in one-letter code: uncharacterized protein (68 aa).

The interval 1–68 (METIIRRFSP…GNSKNIKTKK (68 aa)) is disordered. The span at 9-34 (SPKEKEKEKEKEEKDEKSKDKKEPIK) shows a compositional bias: basic and acidic residues. A compositionally biased stretch (acidic residues) spans 42 to 51 (DEEEEEDEQE).

This is an uncharacterized protein from Dictyostelium discoideum (Social amoeba).